A 91-amino-acid polypeptide reads, in one-letter code: RNA-binding protein Hfq (91 aa).

A Sm domain is found at 9–68 (DPYLNALRRERIPVSIYLVNGIKLQGQIESFDQFVILLKNTVNQMVYKHAISTVVPARSV). Residues 68–91 (VSHHNNNHHTTPTEAVENVETQAE) form a disordered region.

This sequence belongs to the Hfq family. As to quaternary structure, homohexamer.

Functionally, RNA chaperone that binds small regulatory RNA (sRNAs) and mRNAs to facilitate mRNA translational regulation in response to envelope stress, environmental stress and changes in metabolite concentrations. Also binds with high specificity to tRNAs. The protein is RNA-binding protein Hfq of Haemophilus influenzae (strain 86-028NP).